The sequence spans 397 residues: Linalool dehydratase/isomerase (397 aa).

A signal peptide spans 1–26; it reads MRFTLKTTAIVSAAALLAGFGPPPRA. The Proton donor/acceptor role is filled by Asp-64. Disulfide bonds link Cys-74–Cys-127 and Cys-196–Cys-205. Cys-196 is a binding site for (2E)-geraniol.

As to quaternary structure, homotetramer. Homopentamer.

The protein localises to the periplasm. It carries out the reaction (S)-linalool = beta-myrcene + H2O. The catalysed reaction is (2E)-geraniol = (S)-linalool. It participates in terpene metabolism; monoterpene degradation. With respect to regulation, is inhibited by molecular oxygen, high salt concentrations (NaCl, KCl, or MgCl(2)), urea, and Ti(III)citrate. Activity is not affected by EDTA. In terms of biological role, anaerobically catalyzes the stereospecific hydration of beta-myrcene to (3S)-linalool and the isomerization of (3S)-linalool to geraniol. Is thus involved in the initial steps of the anaerobic degradation of the monoterpene beta-myrcene. Also catalyzes the reverse reactions, i.e. the isomerization of geraniol to linalool and the dehydration of linalool to myrcene. In this direction, the formation of myrcene from geraniol may be seen as a detoxification process for the monoterpene alcohol. Shows a relatively broad substrate specificity and can use various geraniol and linalool derivatives. Substrates required a specific alpha-methylallyl alcohol signature motif. Neither the monoterpenes alpha- and beta-ocimene nor the monoterpenoids citronellol and nerol can be used as substrates. The sequence is that of Linalool dehydratase/isomerase from Castellaniella defragrans (strain DSM 12143 / CCUG 39792 / 65Phen) (Alcaligenes defragrans).